A 454-amino-acid polypeptide reads, in one-letter code: Serine/threonine-protein kinase NLK2 (454 aa).

A Protein kinase domain is found at 67-356; the sequence is PEPDRPIGYG…AKDALAHPYL (290 aa). ATP contacts are provided by residues 73 to 81 and Lys96; that span reads IGYGAFGVV. The Proton acceptor role is filled by Asp193.

Belongs to the protein kinase superfamily. CMGC Ser/Thr protein kinase family. MAP kinase subfamily. As to quaternary structure, interacts with sox11, hmgxb4/hmg2l1, rnf138/narf, stat3.1 and mef2a. Mg(2+) serves as cofactor.

Its subcellular location is the nucleus. The protein localises to the cytoplasm. It catalyses the reaction L-seryl-[protein] + ATP = O-phospho-L-seryl-[protein] + ADP + H(+). The catalysed reaction is L-threonyl-[protein] + ATP = O-phospho-L-threonyl-[protein] + ADP + H(+). With respect to regulation, activated by tyrosine and threonine phosphorylation. Its function is as follows. Negatively regulates Wnt/beta-catenin-signaling during development. Plays a role together with sox11 in neural induction during early embryogenesis. Involved in TGFbeta-mediated mesoderm induction in early embryos, acting downstream of map3k7/tak1 to phosphorylate stat3. Augments the rnf138/narf-directed ubiquitination and degradation of tcf/lef by enhancing the association of rnf138/narf and tcf/lef. Phosphorylates mef2a to play a role in anterior neural development, including eye formation. The sequence is that of Serine/threonine-protein kinase NLK2 (nlk.2) from Xenopus tropicalis (Western clawed frog).